A 134-amino-acid polypeptide reads, in one-letter code: Ribonuclease P protein component (134 aa).

It belongs to the RnpA family. In terms of assembly, consists of a catalytic RNA component (M1 or rnpB) and a protein subunit.

It catalyses the reaction Endonucleolytic cleavage of RNA, removing 5'-extranucleotides from tRNA precursor.. In terms of biological role, RNaseP catalyzes the removal of the 5'-leader sequence from pre-tRNA to produce the mature 5'-terminus. It can also cleave other RNA substrates such as 4.5S RNA. The protein component plays an auxiliary but essential role in vivo by binding to the 5'-leader sequence and broadening the substrate specificity of the ribozyme. The sequence is that of Ribonuclease P protein component from Pseudomonas putida (strain ATCC 700007 / DSM 6899 / JCM 31910 / BCRC 17059 / LMG 24140 / F1).